Reading from the N-terminus, the 309-residue chain is Glutaminase (309 aa).

Positions 65, 117, 162, 169, 193, 245, and 263 each coordinate substrate.

The protein belongs to the glutaminase family. In terms of assembly, homotetramer.

The enzyme catalyses L-glutamine + H2O = L-glutamate + NH4(+). The chain is Glutaminase from Bacillus mycoides (strain KBAB4) (Bacillus weihenstephanensis).